We begin with the raw amino-acid sequence, 142 residues long: MKSPHVLVFLCLLVALVTGNLVQFGVMIEKMTGKSALQYNDYGCYCGIGGSHWPVDQTDWCCHAHDCCYGRLEKLGCEPKLEKYLFSVSERGIFCAGRTTCQRLTCECDKRAALCFRRNLGTYNRKYAHYPNKLCTGPTPPC.

A signal peptide spans 1–19; sequence MKSPHVLVFLCLLVALVTG. Positions 41, 43, 45, 47, and 49 each coordinate Ca(2+). 7 disulfide bridges follow: C44–C135, C46–C62, C61–C115, C67–C142, C68–C108, C77–C101, and C95–C106. H65 is a catalytic residue. D66 is a Ca(2+) binding site. D109 is an active-site residue. Residues Y130 and N132 each contribute to the Ca(2+) site.

This sequence belongs to the phospholipase A2 family. The cofactor is Ca(2+). In terms of tissue distribution, restricted to the brain, heart, lung, and placenta.

The protein localises to the secreted. The protein resides in the cytoplasm. It catalyses the reaction a 1,2-diacyl-sn-glycero-3-phosphoethanolamine + H2O = a 1-acyl-sn-glycero-3-phosphoethanolamine + a fatty acid + H(+). The catalysed reaction is 1-hexadecanoyl-2-(9Z-octadecenoyl)-sn-glycero-3-phosphoethanolamine + H2O = 1-hexadecanoyl-sn-glycero-3-phosphoethanolamine + (9Z)-octadecenoate + H(+). The enzyme catalyses 1-hexadecanoyl-2-(9Z,12Z-octadecadienoyl)-sn-glycero-3-phosphoethanolamine + H2O = 1-hexadecanoyl-sn-glycero-3-phosphoethanolamine + (9Z,12Z)-octadecadienoate + H(+). It carries out the reaction 1-hexadecanoyl-2-(5Z,8Z,11Z,14Z-eicosatetraenoyl)-sn-glycero-3-phosphoethanolamine + H2O = 1-hexadecanoyl-sn-glycero-3-phosphoethanolamine + (5Z,8Z,11Z,14Z)-eicosatetraenoate + H(+). It catalyses the reaction 1,2-dihexadecanoyl-sn-glycero-3-phospho-(1'-sn-glycerol) + H2O = 1-hexadecanoyl-sn-glycero-3-phospho-(1'-sn-glycerol) + hexadecanoate + H(+). The catalysed reaction is 1-hexadecanoyl-2-(9Z-octadecenoyl)-sn-glycero-3-phosphoglycerol + H2O = 1-hexadecanoyl-sn-glycero-3-phosphoglycerol + (9Z)-octadecenoate + H(+). The enzyme catalyses a 1,2-diacyl-sn-glycero-3-phosphocholine + H2O = a 1-acyl-sn-glycero-3-phosphocholine + a fatty acid + H(+). It carries out the reaction 1,2-dihexadecanoyl-sn-glycero-3-phosphocholine + H2O = 1-hexadecanoyl-sn-glycero-3-phosphocholine + hexadecanoate + H(+). It catalyses the reaction 1-hexadecanoyl-2-(9Z-octadecenoyl)-sn-glycero-3-phosphocholine + H2O = 1-hexadecanoyl-sn-glycero-3-phosphocholine + (9Z)-octadecenoate + H(+). The catalysed reaction is 1-hexadecanoyl-2-(9Z,12Z-octadecadienoyl)-sn-glycero-3-phosphocholine + H2O = (9Z,12Z)-octadecadienoate + 1-hexadecanoyl-sn-glycero-3-phosphocholine + H(+). The enzyme catalyses 1-hexadecanoyl-2-(4Z,7Z,10Z,13Z,16Z,19Z-docosahexaenoyl)-sn-glycero-3-phosphocholine + H2O = (4Z,7Z,10Z,13Z,16Z,19Z)-docosahexaenoate + 1-hexadecanoyl-sn-glycero-3-phosphocholine + H(+). Functionally, secretory calcium-dependent phospholipase A2 that primarily targets extracellular phospholipids. Hydrolyzes the ester bond of the fatty acyl group attached at sn-2 position of phospholipids (phospholipase A2 activity), releasing various unsaturated fatty acids including oleoate, linoleoate, arachidonate, docosahexaenoate and lysophosphatidylethanolamines in preference to lysophosphatidylcholines. In response to high-fat diet, hydrolyzes minor lipoprotein phospholipids including phosphatidylserines, phosphatidylinositols and phosphatidylglycerols, altering lipoprotein composition and fat storage in adipose tissue and liver. May act in an autocrine and paracrine manner. Contributes to lipid remodeling of cellular membranes and generation of lipid mediators involved in pathogen clearance. Cleaves sn-2 fatty acyl chains of phosphatidylglycerols and phosphatidylethanolamines, which are major components of membrane phospholipids in bacteria. Acts as a hair follicle phospholipase A2. Selectively releases lysophosphatidylethanolamines (LPE) and various unsaturated fatty acids in skin to regulate hair follicle homeostasis. May regulate the inflammatory response by releasing arachidonate, a precursor of prostaglandins and leukotrienes. Upon allergen exposure, may participate in allergic inflammatory response by enhancing leukotriene C4 synthesis and degranulation in mast cells. This is Group IIE secretory phospholipase A2 (PLA2G2E) from Homo sapiens (Human).